Consider the following 388-residue polypeptide: Succinate--CoA ligase [ADP-forming] subunit beta (388 aa).

Residues 9–245 form the ATP-grasp domain; sequence KALLKEYGMP…KSQENERELK (237 aa). ATP contacts are provided by residues Lys46, 53–55, Glu100, Tyr103, and Glu108; that span reads GRG. Asn200 and Asp214 together coordinate Mg(2+). Substrate-binding positions include Asn265 and 322–324; that span reads GIV.

Belongs to the succinate/malate CoA ligase beta subunit family. In terms of assembly, heterotetramer of two alpha and two beta subunits. It depends on Mg(2+) as a cofactor.

It catalyses the reaction succinate + ATP + CoA = succinyl-CoA + ADP + phosphate. The catalysed reaction is GTP + succinate + CoA = succinyl-CoA + GDP + phosphate. It functions in the pathway carbohydrate metabolism; tricarboxylic acid cycle; succinate from succinyl-CoA (ligase route): step 1/1. Its function is as follows. Succinyl-CoA synthetase functions in the citric acid cycle (TCA), coupling the hydrolysis of succinyl-CoA to the synthesis of either ATP or GTP and thus represents the only step of substrate-level phosphorylation in the TCA. The beta subunit provides nucleotide specificity of the enzyme and binds the substrate succinate, while the binding sites for coenzyme A and phosphate are found in the alpha subunit. The protein is Succinate--CoA ligase [ADP-forming] subunit beta of Acinetobacter baumannii (strain AB307-0294).